The following is a 1383-amino-acid chain: DNA-directed RNA polymerase subunit beta (1383 aa).

This sequence belongs to the RNA polymerase beta chain family. As to quaternary structure, the RNAP catalytic core consists of 2 alpha, 1 beta, 1 beta' and 1 omega subunit. When a sigma factor is associated with the core the holoenzyme is formed, which can initiate transcription.

It catalyses the reaction RNA(n) + a ribonucleoside 5'-triphosphate = RNA(n+1) + diphosphate. Functionally, DNA-dependent RNA polymerase catalyzes the transcription of DNA into RNA using the four ribonucleoside triphosphates as substrates. In Bartonella bacilliformis (strain ATCC 35685 / KC583 / Herrer 020/F12,63), this protein is DNA-directed RNA polymerase subunit beta.